The sequence spans 479 residues: Aspartyl/glutamyl-tRNA(Asn/Gln) amidotransferase subunit B (479 aa).

This sequence belongs to the GatB/GatE family. GatB subfamily. In terms of assembly, heterotrimer of A, B and C subunits.

It catalyses the reaction L-glutamyl-tRNA(Gln) + L-glutamine + ATP + H2O = L-glutaminyl-tRNA(Gln) + L-glutamate + ADP + phosphate + H(+). The catalysed reaction is L-aspartyl-tRNA(Asn) + L-glutamine + ATP + H2O = L-asparaginyl-tRNA(Asn) + L-glutamate + ADP + phosphate + 2 H(+). Functionally, allows the formation of correctly charged Asn-tRNA(Asn) or Gln-tRNA(Gln) through the transamidation of misacylated Asp-tRNA(Asn) or Glu-tRNA(Gln) in organisms which lack either or both of asparaginyl-tRNA or glutaminyl-tRNA synthetases. The reaction takes place in the presence of glutamine and ATP through an activated phospho-Asp-tRNA(Asn) or phospho-Glu-tRNA(Gln). The chain is Aspartyl/glutamyl-tRNA(Asn/Gln) amidotransferase subunit B from Streptococcus pyogenes serotype M1.